The following is a 31-amino-acid chain: GYLGGYAAPAIAAAPAIAALPAASSIAANGY.

2 tandem repeats follow at residues A7–A10 and A13–I17.

Component of the cuticle of migratory locust which contains more than 100 different structural proteins. The polypeptide is Cuticle protein 54 (Locusta migratoria (Migratory locust)).